We begin with the raw amino-acid sequence, 537 residues long: CTP synthase (537 aa).

Residues 1–265 are amidoligase domain; it reads MTKFIFVTGG…GKYLIKRLKL (265 aa). Ser-13 contributes to the CTP binding site. A UTP-binding site is contributed by Ser-13. 14 to 19 lines the ATP pocket; sequence GLGKGI. Tyr-54 lines the L-glutamine pocket. Residue Asp-71 coordinates ATP. The Mg(2+) site is built by Asp-71 and Glu-139. CTP is bound by residues 146–148, 186–191, and Lys-222; these read DIE and KTKPTQ. UTP-binding positions include 186–191 and Lys-222; that span reads KTKPTQ. One can recognise a Glutamine amidotransferase type-1 domain in the interval 290–532; it reads EIAIVGKYVK…VRAAKEYKQE (243 aa). Residue Gly-351 coordinates L-glutamine. Residue Cys-378 is the Nucleophile; for glutamine hydrolysis of the active site. Residues 379-382, Glu-402, and Arg-459 each bind L-glutamine; that span reads FGFQ. Active-site residues include His-505 and Glu-507.

Belongs to the CTP synthase family. Homotetramer.

The catalysed reaction is UTP + L-glutamine + ATP + H2O = CTP + L-glutamate + ADP + phosphate + 2 H(+). It catalyses the reaction L-glutamine + H2O = L-glutamate + NH4(+). It carries out the reaction UTP + NH4(+) + ATP = CTP + ADP + phosphate + 2 H(+). It participates in pyrimidine metabolism; CTP biosynthesis via de novo pathway; CTP from UDP: step 2/2. Allosterically activated by GTP, when glutamine is the substrate; GTP has no effect on the reaction when ammonia is the substrate. The allosteric effector GTP functions by stabilizing the protein conformation that binds the tetrahedral intermediate(s) formed during glutamine hydrolysis. Inhibited by the product CTP, via allosteric rather than competitive inhibition. Its function is as follows. Catalyzes the ATP-dependent amination of UTP to CTP with either L-glutamine or ammonia as the source of nitrogen. Regulates intracellular CTP levels through interactions with the four ribonucleotide triphosphates. The polypeptide is CTP synthase (Pyrococcus horikoshii (strain ATCC 700860 / DSM 12428 / JCM 9974 / NBRC 100139 / OT-3)).